A 279-amino-acid polypeptide reads, in one-letter code: Putative hydroxypyruvate isomerase (279 aa).

Residues Glu-155 and Glu-256 each act as proton donor/acceptor in the active site. Positions 260–279 (GDDPSAQSFSWLPAGARAAR) are disordered.

Belongs to the hyi family.

It catalyses the reaction 3-hydroxypyruvate = 2-hydroxy-3-oxopropanoate. In terms of biological role, catalyzes the reversible isomerization between hydroxypyruvate and 2-hydroxy-3-oxopropanoate (also termed tartronate semialdehyde). This is Putative hydroxypyruvate isomerase from Streptomyces coelicolor (strain ATCC BAA-471 / A3(2) / M145).